Here is a 580-residue protein sequence, read N- to C-terminus: YTH domain-containing family protein 2 (580 aa).

Positions 1 to 45 (MSASSLLEQRPKGQGNKVQNGSVHQKDGLNDDDFEPYLSPQARPN) are disordered. S2 carries the post-translational modification N-acetylserine. Phosphoserine is present on residues S2, S4, S5, S22, S39, and S196. The tract at residues 2-385 (SASSLLEQRP…QAGSGSTPSE (384 aa)) is localization to mRNA processing bodies (P-bodies). Residues 247-388 (AKQQPKLKTK…SGSTPSEPHP (142 aa)) are disordered. The segment covering 291 to 317 (ALVQNIGQQPTQGSPQPVGQQANNSPP) has biased composition (polar residues). Low complexity predominate over residues 338–350 (AQLSVQQQAAQPT). The residue at position 360 (S360) is a Phosphoserine. Over residues 360 to 372 (SGFGHNGVDGNGV) the composition is skewed to gly residues. Residues 373 to 384 (GQTQAGSGSTPS) show a composition bias toward polar residues. The interaction with m6A-containing mRNAs stretch occupies residues 386 to 580 (PHPVLEKLRS…VKKERQGRGK (195 aa)). S395 bears the Phosphoserine mark. Residues 411–545 (GRVFIIKSYS…EKAKQVLKII (135 aa)) form the YTH domain. RNA-binding positions include 417–419 (KSY), D423, 433–434 (WC), N463, W487, and W492.

This sequence belongs to the YTHDF family. YTHDF2 subfamily. Interacts with CNOT1; interaction is direct and promotes recruitment of the CCR4-NOT complex. Interacts with YTHDF3. Interacts with RIDA/HRSP12; interaction leads to recruitment of the ribonuclease P/MRP complex. Ubiquitinated by the SCF(SKP2) complex, leading to its degradation.

It localises to the cytoplasm. The protein localises to the cytosol. Its subcellular location is the P-body. It is found in the stress granule. The protein resides in the nucleus. Its function is as follows. Specifically recognizes and binds N6-methyladenosine (m6A)-containing RNAs, and regulates their stability. M6A is a modification present at internal sites of mRNAs and some non-coding RNAs and plays a role in mRNA stability and processing. Acts as a regulator of mRNA stability by promoting degradation of m6A-containing mRNAs via interaction with the CCR4-NOT and ribonuclease P/MRP complexes, depending on the context. The YTHDF paralogs (YTHDF1, YTHDF2 and YTHDF3) share m6A-containing mRNAs targets and act redundantly to mediate mRNA degradation and cellular differentiation. M6A-containing mRNAs containing a binding site for RIDA/HRSP12 (5'-GGUUC-3') are preferentially degraded by endoribonucleolytic cleavage: cooperative binding of RIDA/HRSP12 and YTHDF2 to transcripts leads to recruitment of the ribonuclease P/MRP complex. Other m6A-containing mRNAs undergo deadenylation via direct interaction between YTHDF2 and CNOT1, leading to recruitment of the CCR4-NOT and subsequent deadenylation of m6A-containing mRNAs. Required maternally to regulate oocyte maturation: probably acts by binding to m6A-containing mRNAs, thereby regulating maternal transcript dosage during oocyte maturation, which is essential for the competence of oocytes to sustain early zygotic development. Also required during spermatogenesis: regulates spermagonial adhesion by promoting degradation of m6A-containing transcripts coding for matrix metallopeptidases. Also involved in hematopoietic stem cells specification by binding to m6A-containing mRNAs, leading to promote their degradation. Also acts as a regulator of neural development by promoting m6A-dependent degradation of neural development-related mRNA targets. Inhibits neural specification of induced pluripotent stem cells by binding to methylated neural-specific mRNAs and promoting their degradation, thereby restraining neural differentiation. Regulates circadian regulation of hepatic lipid metabolism: acts by promoting m6A-dependent degradation of PPARA transcripts. Regulates the innate immune response to infection by inhibiting the type I interferon response: acts by binding to m6A-containing IFNB transcripts and promoting their degradation. May also act as a promoter of cap-independent mRNA translation following heat shock stress: upon stress, relocalizes to the nucleus and specifically binds mRNAs with some m6A methylation mark at their 5'-UTR, protecting demethylation of mRNAs by FTO, thereby promoting cap-independent mRNA translation. Regulates mitotic entry by promoting the phase-specific m6A-dependent degradation of WEE1 transcripts. Promotes formation of phase-separated membraneless compartments, such as P-bodies or stress granules, by undergoing liquid-liquid phase separation upon binding to mRNAs containing multiple m6A-modified residues: polymethylated mRNAs act as a multivalent scaffold for the binding of YTHDF proteins, juxtaposing their disordered regions and thereby leading to phase separation. The resulting mRNA-YTHDF complexes then partition into different endogenous phase-separated membraneless compartments, such as P-bodies, stress granules or neuronal RNA granules. May also recognize and bind RNAs modified by C5-methylcytosine (m5C) and act as a regulator of rRNA processing. In Bos taurus (Bovine), this protein is YTH domain-containing family protein 2.